A 594-amino-acid chain; its full sequence is Phostensin (594 aa).

Composition is skewed to basic and acidic residues over residues 18–33 and 109–125; these read EEAAVRGREKAERDRL and VLGDRKAGPLEVLERRS. Disordered regions lie at residues 18–238 and 294–485; these read EEAA…PTDV and VQDI…GKKR. Serine 126, serine 134, serine 174, and serine 194 each carry phosphoserine. Basic and acidic residues-rich tracts occupy residues 133-155 and 167-190; these read QSPKGRESREERLSPRESRDRRL and SLRDWRQSPAEARDLSSRPAEAQK. Threonine 198 carries the post-translational modification Phosphothreonine. Position 224 is a phosphoserine (serine 224). Positions 353-364 are enriched in acidic residues; the sequence is EAEEEAEKEEAE. Residues 403 to 421 show a composition bias toward pro residues; the sequence is PRPPTPAPLSPPPSAPTAP. Serine 412 is subject to Phosphoserine. Lysine 437 is subject to N6-acetyllysine. Serine 510 carries the phosphoserine modification. Residues 531–577 are disordered; it reads YQYPSESSVLEDLGPEPETPIAPLATQPDEEEEEEEEEEELLLQPGL. The span at 558–571 shows a compositional bias: acidic residues; the sequence is PDEEEEEEEEEEEL.

In terms of assembly, interacts with Protein phosphatase 1 (PP1).

It is found in the cytoplasm. Its subcellular location is the cytoskeleton. May target protein phosphatase 1 to F-actin cytoskeleton. This chain is Phostensin (Ppp1r18), found in Mus musculus (Mouse).